Reading from the N-terminus, the 359-residue chain is Protein disulfide-isomerase tigA (359 aa).

An N-terminal signal peptide occupies residues 1–19 (MVRLSNLVSCLGLASAVTA). 2 Thioredoxin domains span residues 20–129 (AVVD…EKTG) and 131–250 (KPRG…EKTG). Catalysis depends on nucleophile residues Cys49, Cys52, Cys169, and Cys172. 2 cysteine pairs are disulfide-bonded: Cys49-Cys52 and Cys169-Cys172. The Prevents secretion from ER signature appears at 356–359 (KDEL).

It belongs to the protein disulfide isomerase family.

Its subcellular location is the endoplasmic reticulum lumen. The enzyme catalyses Catalyzes the rearrangement of -S-S- bonds in proteins.. The protein is Protein disulfide-isomerase tigA (tigA) of Aspergillus niger.